Reading from the N-terminus, the 457-residue chain is Glutamate--tRNA ligase 1 (457 aa).

Residues 9–19 (PSPTGYIHIGN) carry the 'HIGH' region motif. The short motif at 250–254 (GLSKR) is the 'KMSKS' region element. An ATP-binding site is contributed by Lys-253.

This sequence belongs to the class-I aminoacyl-tRNA synthetase family. Glutamate--tRNA ligase type 1 subfamily. Monomer.

It is found in the cytoplasm. The catalysed reaction is tRNA(Glu) + L-glutamate + ATP = L-glutamyl-tRNA(Glu) + AMP + diphosphate. Functionally, catalyzes the attachment of glutamate to tRNA(Glu) in a two-step reaction: glutamate is first activated by ATP to form Glu-AMP and then transferred to the acceptor end of tRNA(Glu). This is Glutamate--tRNA ligase 1 from Brucella abortus (strain S19).